The primary structure comprises 1083 residues: Phospholipase D beta 1 (1083 aa).

Composition is skewed to pro residues over residues 26-38 (RPPSSEPYPPPPT), 46-66 (YPYPPPPYATPPPYASPPPPH), and 132-148 (QYPPPETKPQEPLPPPQ). Residues 26–231 (RPPSSEPYPP…PNSSFPSNSH (206 aa)) are disordered. 2 stretches are compositionally biased toward polar residues: residues 191 to 213 (ISTNQPGPSVPQLSSLPSNSWQS) and 222 to 231 (PNSSFPSNSH). Residues 252–393 (HSADMQMTLF…YSGAKIEGTY (142 aa)) enclose the C2 domain. Asp455 contacts Ca(2+). One can recognise a PLD phosphodiesterase 1 domain in the interval 595-630 (TIYTHHQKNVIVDADAGGNRRKIIAFVGGLDLCDGR). Residues His600, Lys602, and Asp607 contribute to the active site. An a 1,2-diacyl-sn-glycero-3-phosphate-binding site is contributed by His600. Residues His636 and His668 each coordinate Ca(2+). A 1,2-diacyl-sn-glycero-3-phosphate-binding residues include Gln796 and His934. The 28-residue stretch at 929–956 (FMVYVHSKGMVVDDEYVVIGSANINQRS) folds into the PLD phosphodiesterase 2 domain. Residues His934, Lys936, and Asp941 contribute to the active site. Residue Glu997 participates in Ca(2+) binding.

The protein belongs to the phospholipase D family. C2-PLD subfamily. It depends on Ca(2+) as a cofactor. As to expression, expressed in stems, and to a lower amount in leaves, flowers and siliques.

The protein resides in the cytoplasm. It is found in the membrane. It carries out the reaction a 1,2-diacyl-sn-glycero-3-phosphocholine + H2O = a 1,2-diacyl-sn-glycero-3-phosphate + choline + H(+). Its activity is regulated as follows. Inhibited by neomycin. Up-regulated by PIP2 binding. Its function is as follows. Hydrolyzes glycerol-phospholipids at the terminal phosphodiesteric bond to generate phosphatidic acids (PA). Plays an important role in various cellular processes, including phytohormone action, vesicular trafficking, secretion, cytoskeletal arrangement, meiosis, tumor promotion, pathogenesis, membrane deterioration and senescence. Involved in regulating stomatal movement and plant-water status. Can use phosphatidylserine (PS) and phosphatidylethanolamine (PE) as substrates only in the presence of PIP2. Can use phosphatidylcholine (PC), phosphatidylglycerol (PG) or N-acylphosphatidylethanolamine (NAPE) as substrates in the presence of PE and PIP2. Modulates defense responses to bacterial and fungal pathogens. The protein is Phospholipase D beta 1 of Arabidopsis thaliana (Mouse-ear cress).